The sequence spans 475 residues: Ribulose bisphosphate carboxylase large chain (475 aa).

An N6,N6,N6-trimethyllysine modification is found at Lys14. Residues Asn123 and Thr173 each coordinate substrate. The active-site Proton acceptor is the Lys175. Lys177 contacts substrate. Mg(2+) contacts are provided by Lys201, Asp203, and Glu204. N6-carboxylysine is present on Lys201. Catalysis depends on His294, which acts as the Proton acceptor. Residues Arg295, His327, and Ser379 each coordinate substrate.

Belongs to the RuBisCO large chain family. Type I subfamily. As to quaternary structure, heterohexadecamer of 8 large chains and 8 small chains; disulfide-linked. The disulfide link is formed within the large subunit homodimers. Requires Mg(2+) as cofactor. The disulfide bond which can form in the large chain dimeric partners within the hexadecamer appears to be associated with oxidative stress and protein turnover.

It localises to the plastid. The catalysed reaction is 2 (2R)-3-phosphoglycerate + 2 H(+) = D-ribulose 1,5-bisphosphate + CO2 + H2O. It catalyses the reaction D-ribulose 1,5-bisphosphate + O2 = 2-phosphoglycolate + (2R)-3-phosphoglycerate + 2 H(+). Functionally, ruBisCO catalyzes two reactions: the carboxylation of D-ribulose 1,5-bisphosphate, the primary event in carbon dioxide fixation, as well as the oxidative fragmentation of the pentose substrate in the photorespiration process. Both reactions occur simultaneously and in competition at the same active site. The sequence is that of Ribulose bisphosphate carboxylase large chain (rbcL) from Euglena longa (Euglenophycean alga).